The sequence spans 74 residues: uncharacterized protein (74 aa).

This is an uncharacterized protein from Archaeoglobus fulgidus (strain ATCC 49558 / DSM 4304 / JCM 9628 / NBRC 100126 / VC-16).